Consider the following 231-residue polypeptide: Large ribosomal subunit protein uL1 (231 aa).

Belongs to the universal ribosomal protein uL1 family. Part of the 50S ribosomal subunit.

In terms of biological role, binds directly to 23S rRNA. The L1 stalk is quite mobile in the ribosome, and is involved in E site tRNA release. Protein L1 is also a translational repressor protein, it controls the translation of the L11 operon by binding to its mRNA. This is Large ribosomal subunit protein uL1 from Halorhodospira halophila (strain DSM 244 / SL1) (Ectothiorhodospira halophila (strain DSM 244 / SL1)).